The chain runs to 1465 residues: Claspin (1465 aa).

The span at 1-12 (MSESLAETAAAA) shows a compositional bias: low complexity. 3 disordered regions span residues 1–490 (MSES…KAKV), 544–566 (ATAL…GLRM), and 585–636 (ATEF…TEDM). Phosphoserine occurs at positions 45, 49, 52, 64, 75, 109, and 114. Basic and acidic residues predominate over residues 121–133 (QAEKKTQKEEGKQ). A compositionally biased stretch (basic residues) spans 154 to 163 (KSNKTKKAVK). Basic and acidic residues predominate over residues 205 to 216 (EYDHHQQHEKPA). Basic residues predominate over residues 217-228 (KTQKSKKLAKKQ). 4 stretches are compositionally biased toward basic and acidic residues: residues 229–246 (KQQE…EKKK), 254–263 (KKSDKSKIDS), 273–286 (EDLK…EPQK), and 296–335 (TNKD…EQIV). Residues 260-281 (KIDSLMDNEEDAGEDLKMYQED) are a coiled coil. Residues 336-346 (KPKKMAKKNKQ) show a composition bias toward basic residues. Phosphoserine occurs at positions 350 and 354. Residues 358–373 (QNEKVDQDHDLKKMSS) are compositionally biased toward basic and acidic residues. The span at 375 to 388 (NELEMGSDKEDQEM) shows a compositional bias: acidic residues. Phosphoserine occurs at positions 381, 404, 406, 432, 434, 444, 456, 458, and 468. Positions 400-417 (QRMDSESEDEIPKTESEK) are enriched in basic and acidic residues. Residues 432–441 (SESEPEETAE) are compositionally biased toward acidic residues. Over residues 456–470 (SESEPELDNPEESAG) the composition is skewed to acidic residues. Positions 564–587 (LRMTREELEAYAKLMEDRAKEATE) form a coiled coil. The span at 594 to 606 (ESDEEDDSENEEP) shows a compositional bias: acidic residues. Residue T693 is modified to Phosphothreonine. Residues 839–874 (LITKKRMEDLRKKQAEEQEKMAEDEEEGMDVDEEYE) are a coiled coil. A compositionally biased stretch (basic and acidic residues) spans 845–859 (MEDLRKKQAEEQEKM). A disordered region spans residues 845–977 (MEDLRKKQAE…LDLLQTPKPS (133 aa)). Composition is skewed to acidic residues over residues 860-875 (AEDE…EYEP), 913-942 (ADED…EANP), and 960-969 (DDNSDEDDLD). S963 bears the Phosphoserine mark. T973 carries the post-translational modification Phosphothreonine. S990 is modified (phosphoserine). The interval 1058 to 1154 (CSGTFATQLP…AEPVEEIPET (97 aa)) is disordered. A compositionally biased stretch (low complexity) spans 1067 to 1076 (PSQAPTQQPE). A phosphoserine mark is found at S1093 and S1094. Positions 1094–1103 (SDEEAQEDAL) are enriched in acidic residues. Residues 1109 to 1123 (RNKKLTKKRPKKKAK) show a composition bias toward basic residues. The segment covering 1127–1154 (SDDEDSDDEVEEFDEESDAEPVEEIPET) has biased composition (acidic residues). Residue S1287 is modified to Phosphoserine.

Belongs to the claspin family. Post-translationally, phosphorylated in response to DNA damage by IR and HU treatment. Phosphorylation does not require mei-41 or tefu. Detected in the ovary but not in the testis (at protein level).

It is found in the nucleus. Its function is as follows. Required for checkpoint signaling in response to DNA replication stress; either resulting from normal embryogenesis or induced by the DNA synthesis inhibitor hydroxyurea (HU). It is not required for the G2 arrest resulting from DNA double strand breaks induced by ionizing irradiation (IR). Necessary for the timely phosphorylation of Cdk1 at the mid-blastula transition. May have a minor role in maintaining genomic stability in mitotic cells. The sequence is that of Claspin from Drosophila melanogaster (Fruit fly).